The chain runs to 304 residues: Cell surface-binding protein OPG105 (304 aa).

Residues 1-235 (MPQQLSPINI…NDDTQVYYSG (235 aa)) enclose the Alpha-carbonic anhydrase domain. Topologically, residues 1-275 (MPQQLSPINI…YQKYIEGNKT (275 aa)) are virion surface. A helical transmembrane segment spans residues 276–294 (FAIIAIVFVFILTAILFLM). Residues 295 to 304 (SRRYSREKQN) are Intravirion-facing.

The protein belongs to the alpha-carbonic anhydrase family. In terms of assembly, homodimer; disulfide-linked. In terms of processing, apparently non-glycosylated.

The protein resides in the virion membrane. Binds to chondroitin sulfate on the cell surface to provide virion attachment to target cell. The polypeptide is Cell surface-binding protein OPG105 (OPG105) (Rabbitpox virus (strain Utrecht) (RPV)).